A 1222-amino-acid chain; its full sequence is BOS complex subunit NOMO3 (1222 aa).

The first 31 residues, 1–31 (MLVGQGAGPLGPAVVTAAVVLLLSGVGPAHG), serve as a signal peptide directing secretion. Residues 32–1155 (SEDIVVGCGG…NPTRKLPEQD (1124 aa)) lie on the Extracellular side of the membrane. N-linked (GlcNAc...) asparagine glycans are attached at residues N50, N218, and N618. A helical membrane pass occupies residues 1156–1176 (IAQGSYIALPLTLLVLLAGYN). Over 1177–1222 (HDKLIPLLLQLTSRLQGVGALGQAASDNSGPEDAKRQAKKQKTRRT) the chain is Cytoplasmic. Residues 1198–1222 (GQAASDNSGPEDAKRQAKKQKTRRT) form a disordered region. The span at 1213-1222 (QAKKQKTRRT) shows a compositional bias: basic residues.

In terms of assembly, component of the back of Sec61 (BOS) complex, composed of NCLN/Nicalin, NOMO (NOMO1, NOMO2 or NOMO3) and TMEM147. The BOS complex is part of the multi-pass translocon (MPT) complex, composed of three subcomplexes, the GEL complex (composed of RAB5IF/OPTI and TMCO1), the BOS complex (composed of NCLN/Nicalin, NOMO and TMEM147) and the PAT complex (composed of WDR83OS/Asterix and CCDC47). The MPT complex associates with the SEC61 complex. Due to the strong similarity between NOMO1, NOMO2 and NOMO3, similar interaction pattern probably occur for the three gene copies.

The protein localises to the endoplasmic reticulum membrane. Component of the multi-pass translocon (MPT) complex that mediates insertion of multi-pass membrane proteins into the lipid bilayer of membranes. The MPT complex takes over after the SEC61 complex: following membrane insertion of the first few transmembrane segments of proteins by the SEC61 complex, the MPT complex occludes the lateral gate of the SEC61 complex to promote insertion of subsequent transmembrane regions. In Homo sapiens (Human), this protein is BOS complex subunit NOMO3 (NOMO3).